A 355-amino-acid chain; its full sequence is Guanine nucleotide-binding protein G(q) subunit alpha (355 aa).

Cys3 is lipidated: S-palmitoyl cysteine. The region spanning 32–355 is the G-alpha domain; it reads KEIKLLLLGT…QHITEVVPGL (324 aa). The tract at residues 35–48 is G1 motif; sequence KLLLLGTGESGKST. GTP is bound by residues 40 to 47, 174 to 180, 199 to 203, 269 to 272, and Ala326; these read GTGESGKS, LRVRVPT, DVGGQ, and NKKD. Mg(2+) is bound by residues Ser47 and Thr180. The tract at residues 172-180 is G2 motif; it reads DVLRVRVPT. Residues 195–204 form a G3 motif region; sequence FKMVDVGGQR. Residues 265–272 form a G4 motif region; the sequence is ILFLNKKD. Positions 324-329 are G5 motif; it reads TCATDT.

This sequence belongs to the G-alpha family. G(q) subfamily. G proteins are composed of 3 units; alpha, beta and gamma. The alpha chain contains the guanine nucleotide binding site.

In terms of biological role, guanine nucleotide-binding proteins (G proteins) are involved as modulators or transducers in various transmembrane signaling systems. The polypeptide is Guanine nucleotide-binding protein G(q) subunit alpha (Geodia cydonium (Sponge)).